The sequence spans 78 residues: Defensin beta 136 (78 aa).

Residues Met-1–Gly-21 form the signal peptide. Intrachain disulfides connect Cys-33-Cys-60, Cys-40-Cys-54, and Cys-44-Cys-61.

Belongs to the beta-defensin family.

It is found in the secreted. Host defense peptide that exhibits antibacterial and antifungal activity. Exhibits antimicrobial activity against E.coli, S.aureus and C.albicans (in vitro). Has high lipopolysaccharide (LPS)-binding affinity, and may thereby be involved in immunoregulation through LPS neutralization. This Homo sapiens (Human) protein is Defensin beta 136 (DEFB136).